We begin with the raw amino-acid sequence, 432 residues long: Glutamyl-tRNA reductase (432 aa).

Substrate-binding positions include 55-58 (TCNR), serine 114, 119-121 (ETQ), and glutamine 125. The active-site Nucleophile is the cysteine 56. Position 194–199 (194–199 (GAGEMI)) interacts with NADP(+).

The protein belongs to the glutamyl-tRNA reductase family. In terms of assembly, homodimer.

It catalyses the reaction (S)-4-amino-5-oxopentanoate + tRNA(Glu) + NADP(+) = L-glutamyl-tRNA(Glu) + NADPH + H(+). The protein operates within porphyrin-containing compound metabolism; protoporphyrin-IX biosynthesis; 5-aminolevulinate from L-glutamyl-tRNA(Glu): step 1/2. Functionally, catalyzes the NADPH-dependent reduction of glutamyl-tRNA(Glu) to glutamate 1-semialdehyde (GSA). The chain is Glutamyl-tRNA reductase from Burkholderia thailandensis (strain ATCC 700388 / DSM 13276 / CCUG 48851 / CIP 106301 / E264).